The chain runs to 509 residues: Maturase K (509 aa).

The protein belongs to the intron maturase 2 family. MatK subfamily.

It is found in the plastid. It localises to the chloroplast. Its function is as follows. Usually encoded in the trnK tRNA gene intron. Probably assists in splicing its own and other chloroplast group II introns. This is Maturase K from Cicer arietinum (Chickpea).